Here is a 327-residue protein sequence, read N- to C-terminus: Putative HTH-type transcriptional regulatory protein MM_0444 (327 aa).

In terms of domain architecture, HTH cro/C1-type spans 132–190; it reads LKKARTTQSMSLGTLASMVGVSRRTISKYEEEGMDASIDVVLHLEDIFGVELAKPIDIL. The H-T-H motif DNA-binding region spans 143–162; that stretch reads LGTLASMVGVSRRTISKYEE. Residues 195 to 214 are disordered; sequence SRKPRKKAEPEKEEPKGKPG. The segment covering 201–211 has biased composition (basic and acidic residues); that stretch reads KAEPEKEEPKG.

This is Putative HTH-type transcriptional regulatory protein MM_0444 from Methanosarcina mazei (strain ATCC BAA-159 / DSM 3647 / Goe1 / Go1 / JCM 11833 / OCM 88) (Methanosarcina frisia).